A 7570-amino-acid chain; its full sequence is Dystonin (7570 aa).

2 Calponin-homology (CH) domains span residues 35–138 (KVQK…LHFQ) and 151–255 (MSAK…DAFP). Positions 35 to 252 (KVQKKTFTKW…VITYVSSLYD (218 aa)) are actin-binding. 4 positions are modified to phosphoserine: L135, K184, S236, and S237. Spectrin repeat units follow at residues 602–699 (EINM…RHLD) and 701–802 (LHNF…QHIK). In terms of domain architecture, SH3 spans 887–944 (KTSIPIKAICDYRQIEITIYKDDECVLANNSHRAKWKVISPTGNEAMVPSVCFTVPPP). Spectrin repeat units follow at residues 1293–1422 (KYYR…KFAG) and 1440–1540 (KEHV…QESQ). Phosphoserine is present on S1382. The Nuclear localization signal; in isoform 6 motif lies at 1383-1389 (PVKRRRM). At E1565 the chain carries Phosphoserine. 5 Plectin repeats span residues 1584–1626 (IRLL…QLKE), 1660–1703 (KVLE…LERQ), 1774–1817 (RLLS…LTYQ), 1818–1855 (VQTGGIIQSNPAKRLTVDEAVQCDLITSSSALLVLEAQ), and 1856–1891 (RGYVGLIWPHSGEIFPTSSSLQQELITNELAYKILN). Phosphoserine is present on S2229. 3 disordered regions span residues 2317-2346 (SNTSGEDEKTHPGFQQMPEDKEDESEIEEY), 2383-2441 (LLND…DETA), and 2585-2616 (DYIYDSNDQDDDDDDGIDEEGGGIRDENGKPR). Over residues 2336–2345 (DKEDESEIEE) the composition is skewed to acidic residues. Residues 2385 to 2394 (NDQQNNTGTD) show a composition bias toward low complexity. Composition is skewed to acidic residues over residues 2395–2412 (TDSDDDFYDTPLFEDDDH), 2430–2439 (YDTLQEENDE), and 2591–2605 (NDQDDDDDDGIDEEG). S2919 is modified (phosphoserine). Residues 3190–3221 (EASTVPSDSQMSDSSGVSPMTNSSELKPESRD) are disordered. Over residues 3192–3209 (STVPSDSQMSDSSGVSPM) the composition is skewed to low complexity. Spectrin repeat units follow at residues 3395 to 3501 (LQHT…KQIM), 3643 to 3752 (QEYK…KELD), 3926 to 4040 (EKFD…NNLK), 4047 to 4153 (QHYE…EKLQ), 4160 to 4259 (LSVQ…ETLA), 4269 to 4368 (ELFE…EAVT), 4516 to 4621 (QKAQ…QKLE), 4628 to 4732 (TQFQ…DWID), 4742 to 4842 (QSLL…QHLQ), 4849 to 4951 (HQFQ…NKLK), 4958 to 5058 (LKYK…FCLE), 5068 to 5167 (QEVS…SFLE), 5174 to 5277 (GHFQ…EQVE), 5284 to 5388 (EEFY…AQLQ), 5395 to 5497 (GRFQ…RQLE), 5504 to 5715 (QQFH…KTLE), 5831 to 5933 (QQFD…LQLE), 5941 to 6041 (QFWE…VALD), 6048 to 6154 (TQFH…AKLL), 6161 to 6263 (EKFW…DKLE), 6270 to 6373 (VQYQ…HKLE), 6380 to 6482 (GQFQ…QQLD), 6489 to 6591 (KGFH…TKLE), 6598 to 6700 (MEFH…RSLD), 6707 to 6810 (KQFH…NKLE), 6817 to 6918 (GQFT…TRLE), 6925 to 7027 (EEFH…QRLA), and 7037 to 7167 (QELL…RKLN). S3968 is modified (phosphoserine). At S4749 the chain carries Phosphoserine. A Glycyl lysine isopeptide (Lys-Gly) (interchain with G-Cter in ubiquitin) cross-link involves residue K5470. EF-hand domains lie at 7197–7232 (HKKSRVMDFFRRIDKDQDGKITRQEFIDGILSSKFP) and 7233–7268 (TSRLEMSAVADIFDRDGDGYIDYYEFVAALHPNKDA). D7210, D7212, D7214, K7216, E7221, D7246, D7248, D7250, Y7252, and E7257 together coordinate Ca(2+). In terms of domain architecture, GAR spans 7273–7351 (TDADKIEDEV…EFLVKNDPCR (79 aa)). 3 disordered regions span residues 7358-7379 (KMLRSESNSSITTTQPTIAKGR), 7395-7452 (SQGM…SKLR), and 7481-7570 (QFAD…SSKR). Polar residues predominate over residues 7362-7374 (SESNSSITTTQPT). Low complexity-rich tracts occupy residues 7411 to 7441 (SSRGASPNRSTSVSSQAAQAASPQVPATTTP) and 7490 to 7504 (SRPGSRAGSKAGSRA). S7432 bears the Phosphoserine mark. 3 positions are modified to phosphoserine: S7510, S7513, and S7525. Positions 7519–7535 (EIQSVCSDVETVPQTHR) are enriched in polar residues. The short motif at 7550 to 7553 (SKIP) is the Microtubule tip localization signal element.

In terms of assembly, homodimer. Isoform 1 interacts (via N-terminus) with PLEC (via N-terminus). Interacts with the neuronal intermediate filament protein, PRPH. Interacts with DES. Interacts with SYNE3. Isoform 1 and isoform 6 can homodimerize (via N-terminus). Isoform 1 interacts (via N-terminus) with ACTN2. Isoform 1 interacts (via N-terminus) with PLEC (via N-terminus). Isoform 3 interacts (via N-terminus) with COL17A1 (via cytoplasmic region). Isoform 3 interacts (via N-terminus) with ITGB4 isoform beta-4a (via cytoplasmic region). Isoform 3 interacts (via N-terminus) with ERBIN (via C-terminus). Isoform 3 associates (via C-terminal) with KRT5-KRT14 (via rod region) intermediate filaments of keratins. Interacts with MAPRE1; probably required for targeting to the growing microtubule plus ends. Interacts with TMIGD2. Isoform 9 interacts with TMEM108. As to expression, isoform 1 is expressed in myoblasts (at protein level). Isoform 3 is expressed in the skin. Isoform 6 is expressed in the brain. Highly expressed in skeletal muscle and cultured keratinocytes.

The protein localises to the cytoplasm. The protein resides in the cytoskeleton. Its subcellular location is the stress fiber. It localises to the cell projection. It is found in the axon. The protein localises to the myofibril. The protein resides in the sarcomere. Its subcellular location is the z line. It localises to the h zone. It is found in the cell junction. The protein localises to the hemidesmosome. The protein resides in the nucleus. Its subcellular location is the nucleus envelope. It localises to the membrane. It is found in the endoplasmic reticulum membrane. The protein localises to the cell cortex. The protein resides in the cell membrane. In terms of biological role, cytoskeletal linker protein. Acts as an integrator of intermediate filaments, actin and microtubule cytoskeleton networks. Required for anchoring either intermediate filaments to the actin cytoskeleton in neural and muscle cells or keratin-containing intermediate filaments to hemidesmosomes in epithelial cells. The proteins may self-aggregate to form filaments or a two-dimensional mesh. Regulates the organization and stability of the microtubule network of sensory neurons to allow axonal transport. Mediates docking of the dynein/dynactin motor complex to vesicle cargos for retrograde axonal transport through its interaction with TMEM108 and DCTN1. Its function is as follows. Plays a structural role in the assembly of hemidesmosomes of epithelial cells; anchors keratin-containing intermediate filaments to the inner plaque of hemidesmosomes. Required for the regulation of keratinocyte polarity and motility; mediates integrin ITGB4 regulation of RAC1 activity. Functionally, required for bundling actin filaments around the nucleus. Regulates the organization and stability of the microtubule network of sensory neurons to allow axonal transport. The chain is Dystonin from Homo sapiens (Human).